The following is a 305-amino-acid chain: Carbonic anhydrase 4 (305 aa).

The N-terminal stretch at 1-17 (MQLLLALLALAYVAPST) is a signal peptide. The region spanning 20-278 (SGWCYEIQTK…LGKRQVFKSH (259 aa)) is the Alpha-carbonic anhydrase domain. Intrachain disulfides connect Cys-23–Cys-35 and Cys-45–Cys-222. The active-site Proton donor/acceptor is the His-87. Zn(2+) is bound by residues His-114 and His-116. An N-linked (GlcNAc...) asparagine glycan is attached at Asn-123. His-139 provides a ligand contact to Zn(2+). Residue Asn-214 is glycosylated (N-linked (GlcNAc...) asparagine). 218-219 (TT) serves as a coordination point for substrate. A lipid anchor (GPI-anchor amidated serine) is attached at Ser-277. The propeptide at 278-305 (HAPGQLLSLPLPTLLVPTLTCLVANFLQ) is removed in mature form.

It belongs to the alpha-carbonic anhydrase family. Interacts with SLC4A4. The cofactor is Zn(2+).

It is found in the cell membrane. It carries out the reaction hydrogencarbonate + H(+) = CO2 + H2O. Its activity is regulated as follows. Inhibited by acetazolamide. Catalyzes the reversible hydration of carbon dioxide into bicarbonate and protons and thus is essential to maintaining intracellular and extracellular pH. May stimulate the sodium/bicarbonate transporter activity of SLC4A4 that acts in pH homeostasis. It is essential for acid overload removal from the retina and retina epithelium, and acid release in the choriocapillaris in the choroid. This is Carbonic anhydrase 4 (Ca4) from Mus musculus (Mouse).